Reading from the N-terminus, the 1587-residue chain is Pentafunctional AROM polypeptide (1587 aa).

The tract at residues 1–384 (MIEPTKISIL…YEPRASVVAN (384 aa)) is 3-dehydroquinate synthase. NAD(+) is bound by residues 44–46 (DTN), 81–84 (EVSK), 114–116 (GGV), and aspartate 119. A 7-phospho-2-dehydro-3-deoxy-D-arabino-heptonate-binding site is contributed by arginine 130. 139–140 (TT) is an NAD(+) binding site. Residues aspartate 146 and lysine 152 each coordinate 7-phospho-2-dehydro-3-deoxy-D-arabino-heptonate. Residue lysine 161 participates in NAD(+) binding. Asparagine 162 provides a ligand contact to 7-phospho-2-dehydro-3-deoxy-D-arabino-heptonate. NAD(+)-binding positions include 179–182 (FLET) and asparagine 190. Position 194 (glutamate 194) interacts with Zn(2+). Residues 194 to 197 (EVIK) and lysine 250 each bind 7-phospho-2-dehydro-3-deoxy-D-arabino-heptonate. Catalysis depends on glutamate 260, which acts as the Proton acceptor; for 3-dehydroquinate synthase activity. 7-phospho-2-dehydro-3-deoxy-D-arabino-heptonate contacts are provided by residues 264 to 268 (RNLLN) and histidine 271. Histidine 271 is a Zn(2+) binding site. Catalysis depends on histidine 275, which acts as the Proton acceptor; for 3-dehydroquinate synthase activity. Histidine 287 and lysine 356 together coordinate 7-phospho-2-dehydro-3-deoxy-D-arabino-heptonate. Histidine 287 is a binding site for Zn(2+). Residues 397-842 (VFPGVSPKST…WDTLRLKFAV (446 aa)) are EPSP synthase. Catalysis depends on cysteine 824, which acts as the For EPSP synthase activity. Residues 864–1055 (SASVFIIGMR…KKKQHSFFVS (192 aa)) are shikimate kinase. Position 871–878 (871–878 (GMRGAGKT)) interacts with ATP. Residues 1056–1276 (LTLPDLRPAG…AAPGQLSATE (221 aa)) are 3-dehydroquinase. Histidine 1179 (proton acceptor; for 3-dehydroquinate dehydratase activity) is an active-site residue. Lysine 1207 acts as the Schiff-base intermediate with substrate; for 3-dehydroquinate dehydratase activity in catalysis. The tract at residues 1289–1587 (KKRFALFGTP…RDAVLGTKAD (299 aa)) is shikimate dehydrogenase.

It in the N-terminal section; belongs to the sugar phosphate cyclases superfamily. Dehydroquinate synthase family. The protein in the 2nd section; belongs to the EPSP synthase family. In the 3rd section; belongs to the shikimate kinase family. This sequence in the 4th section; belongs to the type-I 3-dehydroquinase family. It in the C-terminal section; belongs to the shikimate dehydrogenase family. Homodimer. The cofactor is Zn(2+).

The protein localises to the cytoplasm. It catalyses the reaction 7-phospho-2-dehydro-3-deoxy-D-arabino-heptonate = 3-dehydroquinate + phosphate. It carries out the reaction 3-dehydroquinate = 3-dehydroshikimate + H2O. The catalysed reaction is shikimate + NADP(+) = 3-dehydroshikimate + NADPH + H(+). The enzyme catalyses shikimate + ATP = 3-phosphoshikimate + ADP + H(+). It catalyses the reaction 3-phosphoshikimate + phosphoenolpyruvate = 5-O-(1-carboxyvinyl)-3-phosphoshikimate + phosphate. It participates in metabolic intermediate biosynthesis; chorismate biosynthesis; chorismate from D-erythrose 4-phosphate and phosphoenolpyruvate: step 2/7. The protein operates within metabolic intermediate biosynthesis; chorismate biosynthesis; chorismate from D-erythrose 4-phosphate and phosphoenolpyruvate: step 3/7. It functions in the pathway metabolic intermediate biosynthesis; chorismate biosynthesis; chorismate from D-erythrose 4-phosphate and phosphoenolpyruvate: step 4/7. Its pathway is metabolic intermediate biosynthesis; chorismate biosynthesis; chorismate from D-erythrose 4-phosphate and phosphoenolpyruvate: step 5/7. It participates in metabolic intermediate biosynthesis; chorismate biosynthesis; chorismate from D-erythrose 4-phosphate and phosphoenolpyruvate: step 6/7. In terms of biological role, the AROM polypeptide catalyzes 5 consecutive enzymatic reactions in prechorismate polyaromatic amino acid biosynthesis. This Aspergillus clavatus (strain ATCC 1007 / CBS 513.65 / DSM 816 / NCTC 3887 / NRRL 1 / QM 1276 / 107) protein is Pentafunctional AROM polypeptide.